We begin with the raw amino-acid sequence, 207 residues long: Tereporin-Ts1 (207 aa).

The first 11 residues, 1–11 (VIFALVLGNAS), serve as a signal peptide directing secretion. Residues 35 to 54 (SAGTSLASTILSGLAASGYR) form an N-terminal region region. Phosphocholine contacts are provided by G111, S129, P131, Y164, and Y165.

It belongs to the actinoporin family. Conoidea subfamily. As to quaternary structure, octamer or nonamer in membranes. Monomer in the soluble state. In terms of tissue distribution, expressed by the venom duct.

The protein resides in the secreted. It is found in the nematocyst. The protein localises to the target cell membrane. Functionally, pore-forming protein that forms pores of around 1 nm and causes cardiac stimulation and cytolysis. The chain is Tereporin-Ts1 from Terebra subulata (Chocolate spotted auger).